A 113-amino-acid chain; its full sequence is Protein CTLA-2-beta (113 aa).

2 tandem repeats follow at residues 15-17 (EWK) and 18-20 (EWK). The 2 X 3 AA tandem repeats of E-W-K stretch occupies residues 15-20 (EWKEWK).

The protein to the propeptide regions of cysteine proteases.

Functionally, not known, expressed in activated T-cell. The polypeptide is Protein CTLA-2-beta (Ctla2b) (Mus musculus (Mouse)).